The following is a 205-amino-acid chain: dTTP/UTP pyrophosphatase (205 aa).

The active-site Proton acceptor is D71.

The protein belongs to the Maf family. YhdE subfamily. Requires a divalent metal cation as cofactor.

Its subcellular location is the cytoplasm. The catalysed reaction is dTTP + H2O = dTMP + diphosphate + H(+). It catalyses the reaction UTP + H2O = UMP + diphosphate + H(+). In terms of biological role, nucleoside triphosphate pyrophosphatase that hydrolyzes dTTP and UTP. May have a dual role in cell division arrest and in preventing the incorporation of modified nucleotides into cellular nucleic acids. In Syntrophus aciditrophicus (strain SB), this protein is dTTP/UTP pyrophosphatase.